The following is an 84-amino-acid chain: Large ribosomal subunit protein eL34 (84 aa).

It belongs to the eukaryotic ribosomal protein eL34 family.

The chain is Large ribosomal subunit protein eL34 from Pyrobaculum islandicum (strain DSM 4184 / JCM 9189 / GEO3).